A 395-amino-acid polypeptide reads, in one-letter code: Phosphoglycerate kinase (395 aa).

Substrate contacts are provided by residues 21-23, R36, 59-62, R120, and R153; these read DFN and HLGR. ATP contacts are provided by residues K203, G294, E325, and 351–354; that span reads GGDS.

It belongs to the phosphoglycerate kinase family. As to quaternary structure, monomer.

Its subcellular location is the cytoplasm. The enzyme catalyses (2R)-3-phosphoglycerate + ATP = (2R)-3-phospho-glyceroyl phosphate + ADP. Its pathway is carbohydrate degradation; glycolysis; pyruvate from D-glyceraldehyde 3-phosphate: step 2/5. The protein is Phosphoglycerate kinase of Finegoldia magna (strain ATCC 29328 / DSM 20472 / WAL 2508) (Peptostreptococcus magnus).